The chain runs to 250 residues: Thermostable monoacylglycerol lipase (250 aa).

Phenylalanine 29 is a substrate binding site. Serine 97 functions as the Nucleophile in the catalytic mechanism. A substrate-binding site is contributed by methionine 98. Catalysis depends on charge relay system residues aspartate 196 and histidine 226.

The protein belongs to the lipase/esterase LIP3/BchO family. In terms of assembly, monomer.

The enzyme catalyses Hydrolyzes glycerol monoesters of long-chain fatty acids.. Not inhibited by cholate, but slightly inhibited by triton X-100 and deoxycholate. Completely inhibited by PMSF (phenylmethylsulfonyl fluoride) at a concentration of 200 uM. In terms of biological role, hydrolyzes monoacylglycerols, with the highest activity occurring with 1-monolauroylglycerol. The chain is Thermostable monoacylglycerol lipase from Bacillus sp. (strain H-257).